The primary structure comprises 149 residues: Ribonuclease H (149 aa).

Residues 5-146 (QRPHVVIFTD…ADELAREGLA (142 aa)) form the RNase H type-1 domain. Positions 14, 52, 74, and 138 each coordinate Mg(2+).

This sequence belongs to the RNase H family. As to quaternary structure, monomer. It depends on Mg(2+) as a cofactor.

The protein resides in the cytoplasm. The enzyme catalyses Endonucleolytic cleavage to 5'-phosphomonoester.. Endonuclease that specifically degrades the RNA of RNA-DNA hybrids. The polypeptide is Ribonuclease H (Afipia carboxidovorans (strain ATCC 49405 / DSM 1227 / KCTC 32145 / OM5) (Oligotropha carboxidovorans)).